A 1018-amino-acid chain; its full sequence is Thrombospondin type-1 domain-containing protein 4 (1018 aa).

Positions 1–25 (MVSHFMGSLSVLCFLLLLGFQFVCP) are cleaved as a signal peptide. The region spanning 53–307 (PGVWGAWGPW…YKLCNTNVCP (255 aa)) is the TSP type-1 1 domain. 3 disordered regions span residues 111-235 (SVPL…RSGL), 254-279 (PAAS…ATQS), and 534-623 (SPQV…NWKQ). Residues 187-200 (QRLRRQKLSSRHSR) are compositionally biased toward basic residues. A compositionally biased stretch (low complexity) spans 201 to 210 (SQGASSARHG). Over residues 259–279 (LFHSPETSNNHGVGTHGATQS) the composition is skewed to polar residues. Basic and acidic residues-rich tracts occupy residues 556-577 (RSQE…RGEA) and 592-603 (RHPDRFSPHRPD). TSP type-1 domains follow at residues 676–737 (CPAF…KICS), 739–792 (WQIR…DMGP), 793–851 (CAKS…GPCT), 852–911 (GKVE…HLKP), and 912–968 (CGAK…QDCV). A PLAC domain is found at 971–1008 (VDENCKDKYYNCNVVVQARLCVYNYYKTACCASCTRVA).

As to quaternary structure, interacts with FBN1. May interact with TGFB1.

It localises to the secreted. It is found in the extracellular space. Its subcellular location is the extracellular matrix. Its function is as follows. Promotes FBN1 matrix assembly. Attenuates TGFB signaling, possibly by accelerating the sequestration of large latent complexes of TGFB or active TGFB by FBN1 microfibril assembly, thereby negatively regulating the expression of TGFB regulatory targets, such as POSTN. In Homo sapiens (Human), this protein is Thrombospondin type-1 domain-containing protein 4 (THSD4).